The primary structure comprises 572 residues: Putative acyl-CoA synthetase CCNA_01223 (572 aa).

The protein belongs to the ATP-dependent AMP-binding enzyme family.

Its pathway is lipid metabolism; sphingolipid metabolism. In terms of biological role, involved in de novo bacterial ceramide synthesis. The polypeptide is Putative acyl-CoA synthetase CCNA_01223 (Caulobacter vibrioides (strain NA1000 / CB15N) (Caulobacter crescentus)).